The sequence spans 312 residues: DNA-directed RNA polymerase subunit alpha (312 aa).

Positions 1–229 (MLQYQIERID…ELFQPLATVT (229 aa)) are alpha N-terminal domain (alpha-NTD). The segment at 240–312 (PSPEAQIPLE…ISIPQSRTSV (73 aa)) is alpha C-terminal domain (alpha-CTD).

It belongs to the RNA polymerase alpha chain family. In cyanobacteria the RNAP catalytic core is composed of 2 alpha, 1 beta, 1 beta', 1 gamma and 1 omega subunit. When a sigma factor is associated with the core the holoenzyme is formed, which can initiate transcription.

The catalysed reaction is RNA(n) + a ribonucleoside 5'-triphosphate = RNA(n+1) + diphosphate. Functionally, DNA-dependent RNA polymerase catalyzes the transcription of DNA into RNA using the four ribonucleoside triphosphates as substrates. The chain is DNA-directed RNA polymerase subunit alpha from Prochlorococcus marinus (strain MIT 9301).